Reading from the N-terminus, the 292-residue chain is 5,10-methylenetetrahydrofolate reductase (292 aa).

E26 functions as the Proton donor/acceptor in the catalytic mechanism. NADH is bound at residue T57. FAD-binding residues include Y58, A60, H86, R116, G117, D118, A130, Y150, H154, A157, D163, N166, R169, and K170. A (6S)-5-methyl-5,6,7,8-tetrahydrofolate-binding site is contributed by D118. Q181 is a binding site for NADH. 3 residues coordinate (6S)-5-methyl-5,6,7,8-tetrahydrofolate: Q181, Q217, and R277.

The protein belongs to the methylenetetrahydrofolate reductase family. FAD is required as a cofactor.

It catalyses the reaction (6S)-5-methyl-5,6,7,8-tetrahydrofolate + NAD(+) = (6R)-5,10-methylene-5,6,7,8-tetrahydrofolate + NADH + H(+). The protein operates within one-carbon metabolism; tetrahydrofolate interconversion. It functions in the pathway amino-acid biosynthesis; L-methionine biosynthesis via de novo pathway. Its function is as follows. Catalyzes the NADH-dependent reduction of 5,10-methylenetetrahydrofolate to 5-methyltetrahydrofolate. Is required to provide the methyl group necessary for methionine synthetase to convert homocysteine to methionine; the methyl group is given by 5-methyltetrahydrofolate. In Haemophilus influenzae (strain ATCC 51907 / DSM 11121 / KW20 / Rd), this protein is 5,10-methylenetetrahydrofolate reductase (metF).